Consider the following 585-residue polypeptide: Eukaryotic translation initiation factor 3 subunit D (585 aa).

Gly residues predominate over residues 110 to 130 (GGGTVFRGRGQRGVGQRGGRA). The segment at 110-152 (GGGTVFRGRGQRGVGQRGGRAGFQRVGAGRGQGGDRYYDNRSA) is disordered. Positions 300–314 (SIDLVTVNENAADAP) are RNA gate. Positions 560–585 (VPPNTFEEDDEAAEEQEEKAEDESEE) are disordered. Residues 565–585 (FEEDDEAAEEQEEKAEDESEE) are compositionally biased toward acidic residues.

Belongs to the eIF-3 subunit D family. Component of the eukaryotic translation initiation factor 3 (eIF-3) complex.

Its subcellular location is the cytoplasm. Functionally, mRNA cap-binding component of the eukaryotic translation initiation factor 3 (eIF-3) complex, which is involved in protein synthesis of a specialized repertoire of mRNAs and, together with other initiation factors, stimulates binding of mRNA and methionyl-tRNAi to the 40S ribosome. The eIF-3 complex specifically targets and initiates translation of a subset of mRNAs involved in cell proliferation. In the eIF-3 complex, eif3d specifically recognizes and binds the 7-methylguanosine cap of a subset of mRNAs. The polypeptide is Eukaryotic translation initiation factor 3 subunit D (Aspergillus fumigatus (strain CBS 144.89 / FGSC A1163 / CEA10) (Neosartorya fumigata)).